A 372-amino-acid chain; its full sequence is Adaptive-response sensory kinase SasA (372 aa).

Positions 147 to 360 (MVAHELRTPL…CFHFTVPVWQ (214 aa)) constitute a Histidine kinase domain. H150 bears the Phosphohistidine; by autocatalysis mark.

Homooligomerizes. Interacts with KaiC. Participates in the KaiBC complex, whose core is composed of a KaiC homohexamer and 6 KaiB.

It carries out the reaction ATP + protein L-histidine = ADP + protein N-phospho-L-histidine.. Functionally, member of the two-component regulatory system SasA/RpaA involved in genome-wide circadian gene expression. One of several clock output pathways. Participates in the Kai clock protein complex, the main circadian regulator in cyanobacteria, via its interaction with KaiC. KaiC enhances the autophosphorylation activity of SasA, which then transfers its phosphate group to RpaA to activate it. In addition to its output function, recruits fold-shifted KaiB (KaiB(fs)) to KaiC to cooperatively form the KaiB(6):KaiC(6) complex (independent of SasA kinase activity). Required for robustness of the circadian rhythm of gene expression and is involved in clock output, also required for adaptation to light/dark cycles. This Prochlorococcus marinus (strain MIT 9215) protein is Adaptive-response sensory kinase SasA.